Here is a 281-residue protein sequence, read N- to C-terminus: MKNIGININTDKDISRNILDKIFQYIHEECSEAKIKVFYDSKGLDNEESRALDAVMVLGGDGTILGTARALAKYDVPIFGINRGHLGFLAEIELEDCKEAIKNLFKGQYKIEDRIMLKCDLKGIDKKDDFLALNDIVLTKGNLSRIVKYSIYVDDVWYTTFVADGVIVATPTGSTAYSLSAGGPIVYPDLDVLEIAPICPHSLGIRPILLNGNSKINIRVLKKYEDPVLTIDGQRYKKVTVNEVTISKSKYKCRLIKFKDKDYFKILRTKISYRSRECEGE.

Catalysis depends on Asp61, which acts as the Proton acceptor. NAD(+) is bound by residues 61–62, 134–135, Arg145, Asp164, 175–180, and Gln234; these read DG, ND, and TAYSLS.

This sequence belongs to the NAD kinase family. A divalent metal cation is required as a cofactor.

It is found in the cytoplasm. It carries out the reaction NAD(+) + ATP = ADP + NADP(+) + H(+). Functionally, involved in the regulation of the intracellular balance of NAD and NADP, and is a key enzyme in the biosynthesis of NADP. Catalyzes specifically the phosphorylation on 2'-hydroxyl of the adenosine moiety of NAD to yield NADP. The polypeptide is NAD kinase (Clostridium botulinum (strain Kyoto / Type A2)).